A 407-amino-acid polypeptide reads, in one-letter code: 1-deoxy-D-xylulose 5-phosphate reductoisomerase (407 aa).

NADPH is bound by residues Thr-25, Gly-26, Ser-27, Ile-28, Asn-53, and Asn-136. Residue Lys-137 participates in 1-deoxy-D-xylulose 5-phosphate binding. Glu-138 serves as a coordination point for NADPH. Asp-162 contributes to the Mn(2+) binding site. 1-deoxy-D-xylulose 5-phosphate is bound by residues Ser-163, Glu-164, Ser-188, and His-211. Residue Glu-164 coordinates Mn(2+). Gly-217 contributes to the NADPH binding site. Residues Ser-224, Asn-229, Lys-230, and Glu-233 each contribute to the 1-deoxy-D-xylulose 5-phosphate site. Residue Glu-233 coordinates Mn(2+).

It belongs to the DXR family. The cofactor is Mg(2+). Requires Mn(2+) as cofactor.

It carries out the reaction 2-C-methyl-D-erythritol 4-phosphate + NADP(+) = 1-deoxy-D-xylulose 5-phosphate + NADPH + H(+). Its pathway is isoprenoid biosynthesis; isopentenyl diphosphate biosynthesis via DXP pathway; isopentenyl diphosphate from 1-deoxy-D-xylulose 5-phosphate: step 1/6. Catalyzes the NADPH-dependent rearrangement and reduction of 1-deoxy-D-xylulose-5-phosphate (DXP) to 2-C-methyl-D-erythritol 4-phosphate (MEP). This Rhodopseudomonas palustris (strain BisB5) protein is 1-deoxy-D-xylulose 5-phosphate reductoisomerase.